A 185-amino-acid polypeptide reads, in one-letter code: Phosphatidylglycerophosphatase GEP4, mitochondrial (185 aa).

The short motif at 45-49 (DKDNC) is the Phosphoryl acceptor element.

It belongs to the GEP4 family.

It localises to the mitochondrion inner membrane. It carries out the reaction a 1,2-diacyl-sn-glycero-3-phospho-(1'-sn-glycero-3'-phosphate) + H2O = a 1,2-diacyl-sn-glycero-3-phospho-(1'-sn-glycerol) + phosphate. It functions in the pathway phospholipid metabolism; phosphatidylglycerol biosynthesis; phosphatidylglycerol from CDP-diacylglycerol: step 2/2. In terms of biological role, phosphatidylglycerophosphatase involved in the biosynthesis of cardiolipin (CL), a unique dimeric phosphoglycerolipid predominantly present in mitochondrial membranes and which has important functions for cellular energy metabolism, mitochondrial dynamics and the initiation of apoptotic pathways. Required for the stability of respiratory chain supercomplexes and for growth at elevated temperature, in presence of ethidium bromide or in absence of prohibitins. This is Phosphatidylglycerophosphatase GEP4, mitochondrial (GEP4) from Saccharomyces cerevisiae (strain ATCC 204508 / S288c) (Baker's yeast).